We begin with the raw amino-acid sequence, 101 residues long: MKLSTCCAALLLALASPAVLAAPGSCERIQSDISQRIINNGVPESSFTLSIVPNDQVDQPDSQVVGHCANDTHKILYTRTTSGNVSAPAQSSQDGAPAEPQ.

The N-terminal stretch at 1–21 (MKLSTCCAALLLALASPAVLA) is a signal peptide. Over residues 79–94 (RTTSGNVSAPAQSSQD) the composition is skewed to polar residues. Positions 79 to 101 (RTTSGNVSAPAQSSQDGAPAEPQ) are disordered.

This is an uncharacterized protein from Escherichia coli (strain K12).